The primary structure comprises 129 residues: Glycine cleavage system H protein (129 aa).

Residues Ser-24–Met-106 enclose the Lipoyl-binding domain. Lys-65 is modified (N6-lipoyllysine).

Belongs to the GcvH family. In terms of assembly, the glycine cleavage system is composed of four proteins: P, T, L and H. The cofactor is (R)-lipoate.

Its function is as follows. The glycine cleavage system catalyzes the degradation of glycine. The H protein shuttles the methylamine group of glycine from the P protein to the T protein. The protein is Glycine cleavage system H protein of Shewanella baltica (strain OS155 / ATCC BAA-1091).